Here is a 251-residue protein sequence, read N- to C-terminus: MNLNSIPAFDDNYIWVLNDEAGRCLIVDPGDAEPVLNAIAANNWQPEAIFLTHHHHDHVGGVKELVEKFPQIVVYGPQETQDKGTTQVVKDGETAFVLGHEFSVIATPGHTLGHICYFSKPYLFCGDTLFSGGCGRLFEGTASQMYQSLKKLSVLPDDTLVCCAHEYTLSNMKFALSILPHDLSINDYYRKVKELRAKNQITLPVILKNERQINVFLRTEDIDLINVINEETLLQQPEERFAWLRSKKDRF.

7 residues coordinate Zn(2+): H53, H55, D57, H58, H110, D127, and H165.

Belongs to the metallo-beta-lactamase superfamily. Glyoxalase II family. In terms of assembly, monomer. The cofactor is Zn(2+).

The enzyme catalyses an S-(2-hydroxyacyl)glutathione + H2O = a 2-hydroxy carboxylate + glutathione + H(+). Its pathway is secondary metabolite metabolism; methylglyoxal degradation; (R)-lactate from methylglyoxal: step 2/2. Its function is as follows. Thiolesterase that catalyzes the hydrolysis of S-D-lactoyl-glutathione to form glutathione and D-lactic acid. This is Hydroxyacylglutathione hydrolase from Escherichia coli (strain ATCC 8739 / DSM 1576 / NBRC 3972 / NCIMB 8545 / WDCM 00012 / Crooks).